The following is a 248-amino-acid chain: NAD kinase (248 aa).

The active-site Proton acceptor is aspartate 45. NAD(+) is bound by residues 45 to 46 (DG), arginine 50, 110 to 111 (NE), and aspartate 138.

The protein belongs to the NAD kinase family. Requires a divalent metal cation as cofactor.

The protein localises to the cytoplasm. The catalysed reaction is NAD(+) + ATP = ADP + NADP(+) + H(+). Its function is as follows. Involved in the regulation of the intracellular balance of NAD and NADP, and is a key enzyme in the biosynthesis of NADP. Catalyzes specifically the phosphorylation on 2'-hydroxyl of the adenosine moiety of NAD to yield NADP. In Sulfurisphaera tokodaii (strain DSM 16993 / JCM 10545 / NBRC 100140 / 7) (Sulfolobus tokodaii), this protein is NAD kinase.